The primary structure comprises 623 residues: V-type proton ATPase catalytic subunit A (623 aa).

252 to 259 (GAFGCGKT) provides a ligand contact to ATP.

This sequence belongs to the ATPase alpha/beta chains family. As to quaternary structure, V-ATPase is a heteromultimeric enzyme composed of a peripheral catalytic V1 complex (main components: subunits A, B, C, D, E, and F) attached to an integral membrane V0 proton pore complex (main component: the proteolipid protein).

The enzyme catalyses ATP + H2O + 4 H(+)(in) = ADP + phosphate + 5 H(+)(out). Functionally, catalytic subunit of the peripheral V1 complex of vacuolar ATPase. V-ATPase vacuolar ATPase is responsible for acidifying a variety of intracellular compartments in eukaryotic cells. The chain is V-type proton ATPase catalytic subunit A from Citrus unshiu (Satsuma mandarin).